The sequence spans 458 residues: GTPase Der (458 aa).

2 consecutive EngA-type G domains span residues 9–171 and 197–368; these read KTIA…DLNQ and IQVG…ECFS. Residues 15–22, 62–66, 123–126, 203–210, 250–254, and 314–317 contribute to the GTP site; these read GQPNVGKS, DTGGM, NKID, GRVNVGKS, DTAGI, and NKWD. The KH-like domain occupies 369 to 453; it reads KRIPTSLLNS…PLILNAKDKK (85 aa).

It belongs to the TRAFAC class TrmE-Era-EngA-EngB-Septin-like GTPase superfamily. EngA (Der) GTPase family. As to quaternary structure, associates with the 50S ribosomal subunit.

In terms of biological role, GTPase that plays an essential role in the late steps of ribosome biogenesis. The chain is GTPase Der from Helicobacter pylori (strain ATCC 700392 / 26695) (Campylobacter pylori).